Reading from the N-terminus, the 109-residue chain is Large ribosomal subunit protein uL24 (109 aa).

It belongs to the universal ribosomal protein uL24 family. In terms of assembly, part of the 50S ribosomal subunit.

One of two assembly initiator proteins, it binds directly to the 5'-end of the 23S rRNA, where it nucleates assembly of the 50S subunit. In terms of biological role, one of the proteins that surrounds the polypeptide exit tunnel on the outside of the subunit. The polypeptide is Large ribosomal subunit protein uL24 (Hamiltonella defensa subsp. Acyrthosiphon pisum (strain 5AT)).